The primary structure comprises 3390 residues: Genome polyprotein (3390 aa).

The interaction with host EXOC1 stretch occupies residues 1 to 15 (MNNQRKKTGKPSINM). Over 1-100 (MNNQRKKTGK…MLSIINKRKK (100 aa)) the chain is Cytoplasmic. The tract at residues 37-72 (LLNGQGPMKLVMAFIAFLRFLAIPPTAGVLARWGTF) is hydrophobic; homodimerization of capsid protein C. The propeptide at 101-114 (TSLCLMMIMPAALA) is ER anchor for the capsid protein C, removed in mature form by serine protease NS3. The helical transmembrane segment at 101–120 (TSLCLMMIMPAALAFHLTSR) threads the bilayer. Topologically, residues 121 to 243 (DGEPRMIVGK…VEKVETWALR (123 aa)) are extracellular. The N-linked (GlcNAc...) asparagine; by host glycan is linked to N183. The chain crosses the membrane as a helical span at residues 244 to 264 (HPGFTILALFLAHYIGTSLTQ). Position 265 (K265) is a topological domain, cytoplasmic. A helical membrane pass occupies residues 266 to 280 (VVIFILLMLVTPSMT). Over 281–723 (MRCVGVGNRD…VHQIFGSAYT (443 aa)) the chain is Extracellular. Intrachain disulfides connect C283-C310, C340-C401, C354-C385, and C372-C396. N-linked (GlcNAc...) asparagine; by host glycosylation occurs at N347. The fusion peptide stretch occupies residues 378–391 (DRGWGNGCGLFGKG). N433 carries N-linked (GlcNAc...) asparagine; by host glycosylation. 2 disulfides stabilise this stretch: C463/C563 and C580/C611. The helical transmembrane segment at 724–744 (ALFSGVSWVMKIGIGVLLTWI) threads the bilayer. Residues 745-750 (GLNSKN) are Cytoplasmic-facing. A helical transmembrane segment spans residues 751–771 (TSMSFSCIAIGIITLYLGAVV). Topologically, residues 772–1193 (QADMGCVINW…MIGSNASDRM (422 aa)) are extracellular. Intrachain disulfides connect C777–C788, C828–C916, C952–C996, C1053–C1102, C1064–C1086, and C1085–C1089. Residues N903 and N980 are each glycosylated (N-linked (GlcNAc...) asparagine; by host). Residues N1132 and N1188 are each glycosylated (N-linked (GlcNAc...) asparagine; by host). A helical membrane pass occupies residues 1194 to 1218 (GMGVTYLALIATFKIQPFLALGFFL). The Cytoplasmic portion of the chain corresponds to 1219–1224 (RKLTSR). The chain crosses the membrane as a helical span at residues 1225–1243 (ENLLLGVGLAMATTLQLPE). Residues 1244–1267 (DIEQMANGIALGLMALKLITQFET) are Lumenal-facing. Residues 1268 to 1288 (YQLWTALISLTCSNTMFTLTV) traverse the membrane as a helical segment. Residue A1289 is a topological domain, cytoplasmic. Residues 1290-1308 (WRTATLILAGVSLLPVCQS) traverse the membrane as a helical segment. Residues 1309–1315 (SSMRKTD) are Lumenal-facing. Residues 1316–1336 (WLPMAVAAMGVPPLPLFIFSL) traverse the membrane as a helical segment. The Cytoplasmic segment spans residues 1337 to 1344 (KDTLKRRS). Residues 1345 to 1365 (WPLNEGVMAVGLVSILASSLL) form a helical membrane-spanning segment. The Lumenal segment spans residues 1366–1368 (RND). Residues 1369–1389 (VPMAGPLVAGGLLIACYVITG) traverse the membrane as a helical segment. Residues 1390-1443 (TSADLTVEKAADITWEEEAEQTGVSHNLMITVDDDGTMRIKDDETENILTVLLK) lie on the Cytoplasmic side of the membrane. Residues 1396–1435 (VEKAADITWEEEAEQTGVSHNLMITVDDDGTMRIKDDETE) form an interacts with and activates NS3 protease region. An intramembrane region (helical) is located at residues 1444 to 1464 (TALLIVSGVFPYSIPATLLVW). Topologically, residues 1465–2146 (HTWQKQTQRS…VEELPETMET (682 aa)) are cytoplasmic. The Peptidase S7 domain occupies 1474 to 1651 (SGVLWDVPSP…NAEPDGPTPE (178 aa)). Active-site charge relay system; for serine protease NS3 activity residues include H1524, D1548, and S1608. Residues 1654–1810 (EEMFKKRNLT…QSNAPIQDEE (157 aa)) enclose the Helicase ATP-binding domain. Positions 1658-1661 (KKRN) are important for RNA-binding. ATP is bound at residue 1667-1674 (LHPGSGKT). The DEAH box motif lies at 1758–1761 (DEAH). A Helicase C-terminal domain is found at 1820–1986 (SGNEWITDFA…GIIPALFEPE (167 aa)). An N6-acetyllysine; by host modification is found at K1862. The chain crosses the membrane as a helical span at residues 2147 to 2167 (LLLLGLMILLTGGAMLFLISG). At 2168-2169 (KG) the chain is on the lumenal side. An intramembrane region (helical) is located at residues 2170-2190 (IGKTSIGLICVIASSGMLWMA). Residue E2191 is a topological domain, lumenal. A helical membrane pass occupies residues 2192–2212 (IPLQWIASAIVLEFFMMVLLI). The Cytoplasmic segment spans residues 2213–2227 (PEPEKQRTPQDNQLA). Residues 2228–2248 (YVVIGILTLAAIIAANEMGLL) traverse the membrane as a helical segment. Residues 2249 to 2273 (ETTKRDLGMSKEPGVVSPTSYLDVD) lie on the Lumenal side of the membrane. Residues 2274-2294 (LHPASAWTLYAVATTVITPML) constitute an intramembrane region (helical). Residues 2295 to 2305 (RHTIENSTANV) lie on the Lumenal side of the membrane. N-linked (GlcNAc...) asparagine; by host glycans are attached at residues N2300 and N2304. The helical intramembrane region spans 2306-2326 (SLAAIANQAVVLMGLDKGWPI). At 2327–2346 (SKMDLGVPLLALGCYSQVNP) the chain is on the lumenal side. The chain crosses the membrane as a helical span at residues 2347–2367 (LTLTAAVLLLITHYAIIGPGL). The Cytoplasmic portion of the chain corresponds to 2368–2412 (QAKATREAQKRTAAGIMKNPTVDGIMTIDLDPVIYDSKFEKQLGQ). A helical transmembrane segment spans residues 2413-2433 (VMLLVLCAVQLLLMRTSWALC). Residues 2434 to 2458 (EALTLATGPITTLWEGSPGKFWNTT) lie on the Lumenal side of the membrane. N2456 is a glycosylation site (N-linked (GlcNAc...) asparagine; by host). Residues 2459 to 2479 (IAVSMANIFRGSYLAGAGLAF) traverse the membrane as a helical segment. Topologically, residues 2480–3390 (SIMKSVGTGK…KEEESEGAIW (911 aa)) are cytoplasmic. In terms of domain architecture, mRNA cap 0-1 NS5-type MT spans 2492-2753 (TGSQGETLGE…DVDLGAGTRH (262 aa)). S2546 provides a ligand contact to S-adenosyl-L-methionine. A Phosphoserine modification is found at S2546. The For 2'-O-MTase activity role is filled by K2551. Positions 2567-2570 (VIDL) match the SUMO-interacting motif motif. S-adenosyl-L-methionine contacts are provided by G2576, W2577, T2594, K2595, D2621, and V2622. The For 2'-O-MTase activity role is filled by D2636. I2637 provides a ligand contact to S-adenosyl-L-methionine. Residues K2670 and E2706 each act as for 2'-O-MTase activity in the active site. Residue Y2708 coordinates S-adenosyl-L-methionine. The Zn(2+) site is built by E2927, H2931, C2936, and C2939. In terms of domain architecture, RdRp catalytic spans 3018–3168 (AMYADDTAGW…PIDDRFANAL (151 aa)). Zn(2+) is bound by residues H3202, C3218, and C3337.

This sequence in the N-terminal section; belongs to the class I-like SAM-binding methyltransferase superfamily. mRNA cap 0-1 NS5-type methyltransferase family. Homodimer. Interacts (via N-terminus) with host EXOC1 (via C-terminus); this interaction results in EXOC1 degradation through the proteasome degradation pathway. In terms of assembly, forms heterodimers with envelope protein E in the endoplasmic reticulum and Golgi. As to quaternary structure, homodimer; in the endoplasmic reticulum and Golgi. Interacts with protein prM. Interacts with non-structural protein 1. Homodimer; Homohexamer when secreted. Interacts with envelope protein E. In terms of assembly, interacts (via N-terminus) with serine protease NS3. As to quaternary structure, forms a heterodimer with serine protease NS3. May form homooligomers. Forms a heterodimer with NS2B. Interacts with NS4B. Interacts with unphosphorylated RNA-directed RNA polymerase NS5; this interaction stimulates RNA-directed RNA polymerase NS5 guanylyltransferase activity. In terms of assembly, interacts with host MAVS; this interaction inhibits the synthesis of IFN-beta. Interacts with host AUP1; the interaction occurs in the presence of Dengue virus NS4B and induces lipophagy which facilitates production of virus progeny particles. As to quaternary structure, interacts with serine protease NS3. Homodimer. Interacts with host STAT2; this interaction inhibits the phosphorylation of the latter, and, when all viral proteins are present (polyprotein), targets STAT2 for degradation. Interacts with serine protease NS3. Specific enzymatic cleavages in vivo yield mature proteins. Cleavages in the lumen of endoplasmic reticulum are performed by host signal peptidase, whereas cleavages in the cytoplasmic side are performed by serine protease NS3. Signal cleavage at the 2K-4B site requires a prior NS3 protease-mediated cleavage at the 4A-2K site. In terms of processing, cleaved in post-Golgi vesicles by a host furin, releasing the mature small envelope protein M, and peptide pr. This cleavage is incomplete as up to 30% of viral particles still carry uncleaved prM. Post-translationally, N-glycosylated. N-glycosylated. The excreted form is glycosylated and this is required for efficient secretion of the protein from infected cells. In terms of processing, acetylated by host KAT5. Acetylation modulates NS3 RNA-binding and unwinding activities and plays an important positive role for viral replication. Post-translationally, sumoylation of RNA-directed RNA polymerase NS5 increases NS5 protein stability allowing proper viral RNA replication. Phosphorylated on serines residues. This phosphorylation may trigger NS5 nuclear localization.

The protein localises to the virion. It localises to the host nucleus. Its subcellular location is the host cytoplasm. It is found in the host perinuclear region. The protein resides in the secreted. The protein localises to the virion membrane. It localises to the host endoplasmic reticulum membrane. Its subcellular location is the host mitochondrion. It catalyses the reaction Selective hydrolysis of -Xaa-Xaa-|-Yaa- bonds in which each of the Xaa can be either Arg or Lys and Yaa can be either Ser or Ala.. It carries out the reaction RNA(n) + a ribonucleoside 5'-triphosphate = RNA(n+1) + diphosphate. The catalysed reaction is a ribonucleoside 5'-triphosphate + H2O = a ribonucleoside 5'-diphosphate + phosphate + H(+). The enzyme catalyses ATP + H2O = ADP + phosphate + H(+). It catalyses the reaction a 5'-end (5'-triphosphoguanosine)-ribonucleoside in mRNA + S-adenosyl-L-methionine = a 5'-end (N(7)-methyl 5'-triphosphoguanosine)-ribonucleoside in mRNA + S-adenosyl-L-homocysteine. It carries out the reaction a 5'-end (N(7)-methyl 5'-triphosphoguanosine)-ribonucleoside in mRNA + S-adenosyl-L-methionine = a 5'-end (N(7)-methyl 5'-triphosphoguanosine)-(2'-O-methyl-ribonucleoside) in mRNA + S-adenosyl-L-homocysteine + H(+). Its function is as follows. Plays a role in virus budding by binding to the cell membrane and gathering the viral RNA into a nucleocapsid that forms the core of a mature virus particle. During virus entry, may induce genome penetration into the host cytoplasm after hemifusion induced by the surface proteins. Can migrate to the cell nucleus where it modulates host functions. Overcomes the anti-viral effects of host EXOC1 by sequestering and degrading the latter through the proteasome degradation pathway. In terms of biological role, inhibits RNA silencing by interfering with host Dicer. Functionally, prevents premature fusion activity of envelope proteins in trans-Golgi by binding to envelope protein E at pH6.0. After virion release in extracellular space, gets dissociated from E dimers. Acts as a chaperone for envelope protein E during intracellular virion assembly by masking and inactivating envelope protein E fusion peptide. prM is the only viral peptide matured by host furin in the trans-Golgi network probably to avoid catastrophic activation of the viral fusion activity in acidic Golgi compartment prior to virion release. prM-E cleavage is inefficient, and many virions are only partially matured. These uncleaved prM would play a role in immune evasion. Its function is as follows. May play a role in virus budding. Exerts cytotoxic effects by activating a mitochondrial apoptotic pathway through M ectodomain. May display a viroporin activity. In terms of biological role, binds to host cell surface receptor and mediates fusion between viral and cellular membranes. Envelope protein is synthesized in the endoplasmic reticulum in the form of heterodimer with protein prM. They play a role in virion budding in the ER, and the newly formed immature particle is covered with 60 spikes composed of heterodimer between precursor prM and envelope protein E. The virion is transported to the Golgi apparatus where the low pH causes dissociation of PrM-E heterodimers and formation of E homodimers. prM-E cleavage is inefficient, and many virions are only partially matured. These uncleaved prM would play a role in immune evasion. Functionally, involved in immune evasion, pathogenesis and viral replication. Once cleaved off the polyprotein, is targeted to three destinations: the viral replication cycle, the plasma membrane and the extracellular compartment. Essential for viral replication. Required for formation of the replication complex and recruitment of other non-structural proteins to the ER-derived membrane structures. Excreted as a hexameric lipoparticle that plays a role against host immune response. Antagonizing the complement function. Binds to the host macrophages and dendritic cells. Inhibits signal transduction originating from Toll-like receptor 3 (TLR3). Disrupts the host endothelial glycocalyx layer of host pulmonary microvascular endothelial cells, inducing degradation of sialic acid and shedding of heparan sulfate proteoglycans. NS1 induces expression of sialidases, heparanase, and activates cathepsin L, which activates heparanase via enzymatic cleavage. These effects are probably linked to the endothelial hyperpermeability observed in severe dengue disease. Its function is as follows. Component of the viral RNA replication complex that functions in virion assembly and antagonizes the host immune response. In terms of biological role, required cofactor for the serine protease function of NS3. May have membrane-destabilizing activity and form viroporins. Functionally, displays three enzymatic activities: serine protease, NTPase and RNA helicase. NS3 serine protease, in association with NS2B, performs its autocleavage and cleaves the polyprotein at dibasic sites in the cytoplasm: C-prM, NS2A-NS2B, NS2B-NS3, NS3-NS4A, NS4A-2K and NS4B-NS5. NS3 RNA helicase binds RNA and unwinds dsRNA in the 3' to 5' direction. Regulates the ATPase activity of the NS3 helicase activity. NS4A allows NS3 helicase to conserve energy during unwinding. Plays a role in the inhibition of the host innate immune response. Interacts with host MAVS and thereby prevents the interaction between RIGI and MAVS. In turn, IFN-beta production is impaired. Interacts with host AUP1 which mediates induction of lipophagy in host cells and facilitates production of virus progeny particles. Its function is as follows. Functions as a signal peptide for NS4B and is required for the interferon antagonism activity of the latter. In terms of biological role, induces the formation of ER-derived membrane vesicles where the viral replication takes place. Inhibits interferon (IFN)-induced host STAT1 phosphorylation and nuclear translocation, thereby preventing the establishment of cellular antiviral state by blocking the IFN-alpha/beta pathway. Functionally, replicates the viral (+) and (-) RNA genome, and performs the capping of genomes in the cytoplasm. NS5 methylates viral RNA cap at guanine N-7 and ribose 2'-O positions. Besides its role in RNA genome replication, also prevents the establishment of cellular antiviral state by blocking the interferon-alpha/beta (IFN-alpha/beta) signaling pathway. Inhibits host TYK2 and STAT2 phosphorylation, thereby preventing activation of JAK-STAT signaling pathway. The polypeptide is Genome polyprotein (pol) (Dengue virus type 3 (strain Martinique/1243/1999) (DENV-3)).